The primary structure comprises 81 residues: Putative phytosulfokines 6 (81 aa).

Positions 1-20 (MKQSLCLAVLFLILSTSSSA) are cleaved as a signal peptide. A propeptide spanning residues 21–72 (IRRGKEDQEINPLVSATSVEEDSVNKLMGMEYCGEGDEECLRRRMMTESHLD) is cleaved from the precursor. 2 positions are modified to sulfotyrosine: Y73 and Y75. The propeptide occupies 78–81 (HHKH).

It belongs to the phytosulfokine family. In terms of processing, sulfation is important for activity and for the binding to a putative membrane receptor. Post-translationally, PSK-beta is an enzymatic derivative of PSK-alpha. In terms of tissue distribution, expressed in roots, leaves, stems, flowers and siliques. Most abundant in vascular bundles and in root tips.

Its subcellular location is the secreted. Functionally, promotes plant cell differentiation, organogenesis and somatic embryogenesis as well as cell proliferation. This Arabidopsis thaliana (Mouse-ear cress) protein is Putative phytosulfokines 6 (PSK6).